A 120-amino-acid polypeptide reads, in one-letter code: Acylphosphatase-1 (120 aa).

The residue at position 2 (Ala-2) is an N-acetylalanine. In terms of domain architecture, Acylphosphatase-like spans 8–98; that stretch reads SCEFEVFGRV…YGYANFHIKP (91 aa). Active-site residues include Arg-23 and Asn-41. Residues 91-120 form a disordered region; the sequence is YANFHIKPDPHENRPVHEGLGSSSSHHDSN. A compositionally biased stretch (basic and acidic residues) spans 96-107; it reads IKPDPHENRPVH.

It belongs to the acylphosphatase family.

The protein resides in the cytoplasm. The enzyme catalyses an acyl phosphate + H2O = a carboxylate + phosphate + H(+). The sequence is that of Acylphosphatase-1 (Acyp) from Drosophila melanogaster (Fruit fly).